We begin with the raw amino-acid sequence, 282 residues long: Pantothenate synthetase (282 aa).

30–37 (MGYLHEGH) lines the ATP pocket. The active-site Proton donor is the H37. Position 61 (Q61) interacts with (R)-pantoate. Q61 is a binding site for beta-alanine. Residue 147 to 150 (GMKD) participates in ATP binding. Q153 lines the (R)-pantoate pocket. ATP is bound by residues V176 and 184-187 (KSSR).

Belongs to the pantothenate synthetase family. Homodimer.

It is found in the cytoplasm. The enzyme catalyses (R)-pantoate + beta-alanine + ATP = (R)-pantothenate + AMP + diphosphate + H(+). The protein operates within cofactor biosynthesis; (R)-pantothenate biosynthesis; (R)-pantothenate from (R)-pantoate and beta-alanine: step 1/1. Catalyzes the condensation of pantoate with beta-alanine in an ATP-dependent reaction via a pantoyl-adenylate intermediate. This chain is Pantothenate synthetase, found in Bacillus cereus (strain B4264).